We begin with the raw amino-acid sequence, 352 residues long: Transcription factor MYB51 (352 aa).

2 HTH myb-type domains span residues 10 to 62 (ELGL…ANYL) and 63 to 117 (RPDI…KKRL). 2 DNA-binding regions (H-T-H motif) span residues 38 to 62 (WRTL…ANYL) and 90 to 113 (WSAI…NTHI). Disordered stretches follow at residues 128 to 157 (KGIT…DLDN) and 198 to 219 (GGPL…SVDS). Over residues 203–219 (STSHTTNTTTTSVSVDS) the composition is skewed to low complexity.

As to quaternary structure, can form complexes with MYC2, MYC3 or MYC4. In terms of tissue distribution, expressed in vegetative parts of the plant, mainly in mature rosette leaves and in trichomes. Detected in roots, but not in mature flowers or siliques.

It localises to the nucleus. Transcription factor positively regulating indolic glucosinolate biosynthetic pathway genes. This is Transcription factor MYB51 (MYB51) from Arabidopsis thaliana (Mouse-ear cress).